Here is a 292-residue protein sequence, read N- to C-terminus: Leucine-rich repeat-containing protein 10B (292 aa).

The interval 1–20 (MGIAESTPDELPSDAEEQLR) is disordered. Over residues 7 to 16 (TPDELPSDAE) the composition is skewed to acidic residues. LRR repeat units follow at residues 22-43 (GDQQ…VCAL), 45-66 (RLQK…IEEL), 68-90 (ELRI…CRLP), 91-112 (RLTR…FAQL), 114-136 (SLRC…LRLV), 137-158 (ALQS…LPRM), 160-181 (GLRG…LLRM), 183-204 (RLHI…HPLR), and 205-226 (ALRV…ADTV). Residues 236-261 (RMAERDEPTPRPPPRRPARAFEDEEE) are disordered.

This chain is Leucine-rich repeat-containing protein 10B (LRRC10B), found in Homo sapiens (Human).